Here is an 87-residue protein sequence, read N- to C-terminus: Acyl-CoA-binding protein (87 aa).

Ser2 is subject to N-acetylserine. The 86-residue stretch at 2 to 87 (SQAEFEKAAE…VEELKKKYGI (86 aa)) folds into the ACB domain. An N6-acetyllysine; alternate modification is found at Lys8. N6-succinyllysine; alternate is present on Lys8. Lys14 lines the an acyl-CoA pocket. Lys17 carries the post-translational modification N6-succinyllysine. An N6-acetyllysine modification is found at Lys19. Tyr29 carries the post-translational modification Phosphotyrosine. An acyl-CoA-binding positions include 29–33 (YSHYK), Lys51, Lys55, and Tyr74. Lys51 is modified (N6-acetyllysine). Lys55 is modified (N6-acetyllysine; alternate). Lys55 is subject to N6-succinyllysine; alternate. At Lys55 the chain carries N6-(2-hydroxyisobutyryl)lysine; alternate. At Lys55 the chain carries N6-malonyllysine; alternate. Position 77 is an N6-acetyllysine; alternate (Lys77). The residue at position 77 (Lys77) is an N6-succinyllysine; alternate.

It belongs to the ACBP family. In terms of assembly, monomer.

It localises to the endoplasmic reticulum. Its subcellular location is the golgi apparatus. Its function is as follows. Binds medium- and long-chain acyl-CoA esters with very high affinity and may function as an intracellular carrier of acyl-CoA esters. It is also able to displace diazepam from the benzodiazepine (BZD) recognition site located on the GABA type A receptor. It is therefore possible that this protein also acts as a neuropeptide to modulate the action of the GABA receptor. DBI(32-86) has antibacterial properties. The polypeptide is Acyl-CoA-binding protein (DBI) (Sus scrofa (Pig)).